Consider the following 104-residue polypeptide: Small ribosomal subunit protein uS10 (104 aa).

It belongs to the universal ribosomal protein uS10 family. As to quaternary structure, part of the 30S ribosomal subunit.

Its function is as follows. Involved in the binding of tRNA to the ribosomes. In Buchnera aphidicola subsp. Baizongia pistaciae (strain Bp), this protein is Small ribosomal subunit protein uS10.